Reading from the N-terminus, the 161-residue chain is Ribosomal RNA large subunit methyltransferase H (161 aa).

Residues leucine 78, glycine 110, and 129–134 (LGRMTF) contribute to the S-adenosyl-L-methionine site.

It belongs to the RNA methyltransferase RlmH family. Homodimer.

Its subcellular location is the cytoplasm. The catalysed reaction is pseudouridine(1915) in 23S rRNA + S-adenosyl-L-methionine = N(3)-methylpseudouridine(1915) in 23S rRNA + S-adenosyl-L-homocysteine + H(+). Specifically methylates the pseudouridine at position 1915 (m3Psi1915) in 23S rRNA. The polypeptide is Ribosomal RNA large subunit methyltransferase H (Symbiobacterium thermophilum (strain DSM 24528 / JCM 14929 / IAM 14863 / T)).